A 264-amino-acid polypeptide reads, in one-letter code: tRNA (guanine-N(1)-)-methyltransferase (264 aa).

Residues G113 and 133 to 138 (IGDYVL) each bind S-adenosyl-L-methionine. Residues 244–264 (VQQAATPGGQRRPPWHRDSRA) are disordered.

The protein belongs to the RNA methyltransferase TrmD family. Homodimer.

The protein resides in the cytoplasm. The enzyme catalyses guanosine(37) in tRNA + S-adenosyl-L-methionine = N(1)-methylguanosine(37) in tRNA + S-adenosyl-L-homocysteine + H(+). In terms of biological role, specifically methylates guanosine-37 in various tRNAs. The chain is tRNA (guanine-N(1)-)-methyltransferase from Frankia alni (strain DSM 45986 / CECT 9034 / ACN14a).